Consider the following 385-residue polypeptide: 8-amino-7-oxononanoate synthase (385 aa).

A substrate-binding site is contributed by Arg21. Residue 108 to 109 (GF) coordinates pyridoxal 5'-phosphate. A substrate-binding site is contributed by His133. Pyridoxal 5'-phosphate is bound by residues Ser179, His207, and Thr233. Residue Lys236 is modified to N6-(pyridoxal phosphate)lysine. Thr352 provides a ligand contact to substrate.

The protein belongs to the class-II pyridoxal-phosphate-dependent aminotransferase family. BioF subfamily. Homodimer. Pyridoxal 5'-phosphate serves as cofactor.

The enzyme catalyses 6-carboxyhexanoyl-[ACP] + L-alanine + H(+) = (8S)-8-amino-7-oxononanoate + holo-[ACP] + CO2. It participates in cofactor biosynthesis; biotin biosynthesis. Its function is as follows. Catalyzes the decarboxylative condensation of pimeloyl-[acyl-carrier protein] and L-alanine to produce 8-amino-7-oxononanoate (AON), [acyl-carrier protein], and carbon dioxide. In Klebsiella pneumoniae (strain 342), this protein is 8-amino-7-oxononanoate synthase.